The chain runs to 201 residues: Holliday junction branch migration complex subunit RuvA (201 aa).

Positions 1 to 63 are domain I; that stretch reads MYDYIKGTVT…EDNISLFGFQ (63 aa). A domain II region spans residues 64-142; the sequence is TTEERYLFKK…DVVASEIVYV (79 aa). Positions 143 to 153 are flexible linker; that stretch reads APENDMVAGLS. Residues 153–201 are domain III; sequence SPQLEEAVLALEALGYSTRELKKVIPKLAKEEDLTSDAYIKLALQLMTK.

Belongs to the RuvA family. In terms of assembly, homotetramer. Forms an RuvA(8)-RuvB(12)-Holliday junction (HJ) complex. HJ DNA is sandwiched between 2 RuvA tetramers; dsDNA enters through RuvA and exits via RuvB. An RuvB hexamer assembles on each DNA strand where it exits the tetramer. Each RuvB hexamer is contacted by two RuvA subunits (via domain III) on 2 adjacent RuvB subunits; this complex drives branch migration. In the full resolvosome a probable DNA-RuvA(4)-RuvB(12)-RuvC(2) complex forms which resolves the HJ.

The protein resides in the cytoplasm. In terms of biological role, the RuvA-RuvB-RuvC complex processes Holliday junction (HJ) DNA during genetic recombination and DNA repair, while the RuvA-RuvB complex plays an important role in the rescue of blocked DNA replication forks via replication fork reversal (RFR). RuvA specifically binds to HJ cruciform DNA, conferring on it an open structure. The RuvB hexamer acts as an ATP-dependent pump, pulling dsDNA into and through the RuvAB complex. HJ branch migration allows RuvC to scan DNA until it finds its consensus sequence, where it cleaves and resolves the cruciform DNA. The polypeptide is Holliday junction branch migration complex subunit RuvA (Listeria monocytogenes serotype 4a (strain HCC23)).